A 275-amino-acid polypeptide reads, in one-letter code: 2,3,4,5-tetrahydropyridine-2,6-dicarboxylate N-succinyltransferase (275 aa).

Residues arginine 104 and aspartate 141 each contribute to the substrate site.

The protein belongs to the transferase hexapeptide repeat family. In terms of assembly, homotrimer.

Its subcellular location is the cytoplasm. It catalyses the reaction (S)-2,3,4,5-tetrahydrodipicolinate + succinyl-CoA + H2O = (S)-2-succinylamino-6-oxoheptanedioate + CoA. It functions in the pathway amino-acid biosynthesis; L-lysine biosynthesis via DAP pathway; LL-2,6-diaminopimelate from (S)-tetrahydrodipicolinate (succinylase route): step 1/3. The polypeptide is 2,3,4,5-tetrahydropyridine-2,6-dicarboxylate N-succinyltransferase (Aeromonas salmonicida (strain A449)).